A 416-amino-acid chain; its full sequence is UDP-N-acetylglucosamine 1-carboxyvinyltransferase (416 aa).

22-23 (KN) serves as a coordination point for phosphoenolpyruvate. Residue arginine 91 coordinates UDP-N-acetyl-alpha-D-glucosamine. Cysteine 115 serves as the catalytic Proton donor. At cysteine 115 the chain carries 2-(S-cysteinyl)pyruvic acid O-phosphothioketal. UDP-N-acetyl-alpha-D-glucosamine-binding positions include 120-124 (RPIDL), aspartate 305, and isoleucine 327.

It belongs to the EPSP synthase family. MurA subfamily.

The protein localises to the cytoplasm. It carries out the reaction phosphoenolpyruvate + UDP-N-acetyl-alpha-D-glucosamine = UDP-N-acetyl-3-O-(1-carboxyvinyl)-alpha-D-glucosamine + phosphate. It functions in the pathway cell wall biogenesis; peptidoglycan biosynthesis. Functionally, cell wall formation. Adds enolpyruvyl to UDP-N-acetylglucosamine. The polypeptide is UDP-N-acetylglucosamine 1-carboxyvinyltransferase (Buchnera aphidicola subsp. Acyrthosiphon pisum (strain Tuc7)).